The primary structure comprises 548 residues: pH-responsive protein 1 (548 aa).

The signal sequence occupies residues 1 to 20 (MYSLIKSLATFATLFSLTLA). N-linked (GlcNAc...) asparagine glycosylation occurs at N41. A disulfide bridge links C82 with C111. N173 and N261 each carry an N-linked (GlcNAc...) asparagine glycan. Intrachain disulfides connect C224-C358, C242-C273, C381-C432, C390-C456, and C409-C414. The interval 483-518 (GKASSSGGSSKSGSSSASASGSSSSSTSSGSSSSSG) is disordered. S517 is lipidated: GPI-anchor amidated serine. Residues 518-548 (GVKATQQMSMVKLVSIITIVTAFVGGMSVVF) constitute a propeptide, removed in mature form.

This sequence belongs to the glycosyl hydrolase 72 family.

It is found in the cell membrane. In terms of biological role, required for apical cell growth and plays an essential role in morphogenesis. May be integral to the pathogenic ability of the organism. This is pH-responsive protein 1 (PHR1) from Candida albicans (strain SC5314 / ATCC MYA-2876) (Yeast).